The following is a 205-amino-acid chain: Cyanate hydratase (205 aa).

Active-site residues include Arg133, Glu136, and Ser159.

The protein belongs to the cyanase family.

The enzyme catalyses cyanate + hydrogencarbonate + 3 H(+) = NH4(+) + 2 CO2. In terms of biological role, catalyzes the reaction of cyanate with bicarbonate to produce ammonia and carbon dioxide. The protein is Cyanate hydratase of Thalassiosira pseudonana (Marine diatom).